A 437-amino-acid chain; its full sequence is Epsilon-sarcoglycan (437 aa).

Over 1–317 (MQLPWWWELG…LKSRDYYTDF (317 aa)) the chain is Extracellular. N-linked (GlcNAc...) asparagine glycosylation is present at N200. The helical transmembrane segment at 318 to 338 (LVTLAVPSAVALVLFLILAYI) threads the bilayer. The Cytoplasmic portion of the chain corresponds to 339-437 (MCCRREGVEK…QQQTTGKWYS (99 aa)). The segment at 418–437 (QNLPHQTQIPQQQTTGKWYS) is disordered.

This sequence belongs to the sarcoglycan alpha/epsilon family. Post-translationally, N-glycosylated. In terms of processing, ubiquitinated, leading to its degradation by the proteasome.

Its subcellular location is the cell membrane. It localises to the sarcolemma. The protein localises to the cytoplasm. It is found in the cytoskeleton. The protein resides in the cell projection. Its subcellular location is the dendrite. It localises to the golgi apparatus. Component of the sarcoglycan complex, a subcomplex of the dystrophin-glycoprotein complex which forms a link between the F-actin cytoskeleton and the extracellular matrix. The protein is Epsilon-sarcoglycan (SGCE) of Bos taurus (Bovine).